The following is a 102-amino-acid chain: Co-chaperonin GroES (102 aa).

The protein belongs to the GroES chaperonin family. In terms of assembly, heptamer of 7 subunits arranged in a ring. Interacts with the chaperonin GroEL.

It localises to the cytoplasm. In terms of biological role, together with the chaperonin GroEL, plays an essential role in assisting protein folding. The GroEL-GroES system forms a nano-cage that allows encapsulation of the non-native substrate proteins and provides a physical environment optimized to promote and accelerate protein folding. GroES binds to the apical surface of the GroEL ring, thereby capping the opening of the GroEL channel. This chain is Co-chaperonin GroES, found in Chlamydia caviae (strain ATCC VR-813 / DSM 19441 / 03DC25 / GPIC) (Chlamydophila caviae).